A 559-amino-acid polypeptide reads, in one-letter code: Formate--tetrahydrofolate ligase (559 aa).

Residue 68–75 coordinates ATP; the sequence is TPAGEGKT.

The protein belongs to the formate--tetrahydrofolate ligase family.

It carries out the reaction (6S)-5,6,7,8-tetrahydrofolate + formate + ATP = (6R)-10-formyltetrahydrofolate + ADP + phosphate. The protein operates within one-carbon metabolism; tetrahydrofolate interconversion. In Moorella thermoacetica (strain ATCC 39073 / JCM 9320), this protein is Formate--tetrahydrofolate ligase.